The primary structure comprises 282 residues: tRNA pseudouridine synthase B (282 aa).

Asp-39 serves as the catalytic Nucleophile.

It belongs to the pseudouridine synthase TruB family. Type 1 subfamily.

The enzyme catalyses uridine(55) in tRNA = pseudouridine(55) in tRNA. Functionally, responsible for synthesis of pseudouridine from uracil-55 in the psi GC loop of transfer RNAs. The polypeptide is tRNA pseudouridine synthase B (Borrelia garinii subsp. bavariensis (strain ATCC BAA-2496 / DSM 23469 / PBi) (Borreliella bavariensis)).